Here is a 252-residue protein sequence, read N- to C-terminus: MSFSLSRLVVALGAGLLACAAQAAEVQVAVAANFTAPMKDIASQFEKDTGHKVITSFGPTGGFYSQIQNGAPFEVFLAADDTTPEKLEKEGGTVAGSRFTYAVGKLVLWSAKPGYVDDQGAVLKKNAFKHLSIANPKTAPYGAAAVQVLAKLGLTEATKSKLVEGASIAQAHQFVATGNAELGFVALSQVYKDGKLTGGSGWNVPGDLYEPIRQDAVILTKGKDNPAAQALVDYLKGPKATEVIKAYGYGLQ.

An N-terminal signal peptide occupies residues 1–23; it reads MSFSLSRLVVALGAGLLACAAQA. Molybdate-binding residues include T60 and I168.

It belongs to the bacterial solute-binding protein ModA family. In terms of assembly, the complex is composed of two ATP-binding proteins (ModC), two transmembrane proteins (ModB) and a solute-binding protein (ModA).

It localises to the periplasm. In terms of biological role, involved in the transport of molybdenum into the cell. The protein is Molybdate-binding protein ModA (modA) of Azotobacter vinelandii.